The sequence spans 227 residues: ATP synthase F(0) complex subunit a (227 aa).

The next 6 helical transmembrane spans lie at 12–32 (PYLM…LLFP), 69–89 (WALL…MGLL), 98–118 (QLSM…LIGL), 139–159 (IPIL…ALGV), 170–190 (LLIQ…PSIS), and 196–216 (ILLL…YVFV).

The protein belongs to the ATPase A chain family. As to quaternary structure, component of the ATP synthase complex composed at least of ATP5F1A/subunit alpha, ATP5F1B/subunit beta, ATP5MC1/subunit c (homooctomer), MT-ATP6/subunit a, MT-ATP8/subunit 8, ATP5ME/subunit e, ATP5MF/subunit f, ATP5MG/subunit g, ATP5MK/subunit k, ATP5MJ/subunit j, ATP5F1C/subunit gamma, ATP5F1D/subunit delta, ATP5F1E/subunit epsilon, ATP5PF/subunit F6, ATP5PB/subunit b, ATP5PD/subunit d, ATP5PO/subunit OSCP. ATP synthase complex consists of a soluble F(1) head domain (subunits alpha(3) and beta(3)) - the catalytic core - and a membrane F(0) domain - the membrane proton channel (subunits c, a, 8, e, f, g, k and j). These two domains are linked by a central stalk (subunits gamma, delta, and epsilon) rotating inside the F1 region and a stationary peripheral stalk (subunits F6, b, d, and OSCP). Interacts with DNAJC30; interaction is direct.

It is found in the mitochondrion inner membrane. The enzyme catalyses H(+)(in) = H(+)(out). In terms of biological role, subunit a, of the mitochondrial membrane ATP synthase complex (F(1)F(0) ATP synthase or Complex V) that produces ATP from ADP in the presence of a proton gradient across the membrane which is generated by electron transport complexes of the respiratory chain. ATP synthase complex consist of a soluble F(1) head domain - the catalytic core - and a membrane F(1) domain - the membrane proton channel. These two domains are linked by a central stalk rotating inside the F(1) region and a stationary peripheral stalk. During catalysis, ATP synthesis in the catalytic domain of F(1) is coupled via a rotary mechanism of the central stalk subunits to proton translocation. With the subunit c (ATP5MC1), forms the proton-conducting channel in the F(0) domain, that contains two crucial half-channels (inlet and outlet) that facilitate proton movement from the mitochondrial intermembrane space (IMS) into the matrix. Protons are taken up via the inlet half-channel and released through the outlet half-channel, following a Grotthuss mechanism. The chain is ATP synthase F(0) complex subunit a from Coturnix japonica (Japanese quail).